The sequence spans 217 residues: ATP-dependent Clp protease proteolytic subunit (217 aa).

Serine 121 functions as the Nucleophile in the catalytic mechanism. Histidine 146 is a catalytic residue.

The protein belongs to the peptidase S14 family. Fourteen ClpP subunits assemble into 2 heptameric rings which stack back to back to give a disk-like structure with a central cavity, resembling the structure of eukaryotic proteasomes.

It localises to the cytoplasm. It catalyses the reaction Hydrolysis of proteins to small peptides in the presence of ATP and magnesium. alpha-casein is the usual test substrate. In the absence of ATP, only oligopeptides shorter than five residues are hydrolyzed (such as succinyl-Leu-Tyr-|-NHMec, and Leu-Tyr-Leu-|-Tyr-Trp, in which cleavage of the -Tyr-|-Leu- and -Tyr-|-Trp bonds also occurs).. In terms of biological role, cleaves peptides in various proteins in a process that requires ATP hydrolysis. Has a chymotrypsin-like activity. Plays a major role in the degradation of misfolded proteins. This is ATP-dependent Clp protease proteolytic subunit from Burkholderia mallei (strain NCTC 10247).